Here is a 63-residue protein sequence, read N- to C-terminus: Beta-defensin 38 (63 aa).

The N-terminal stretch at 1 to 21 (MKISCFLLLILSLYFFQINQA) is a signal peptide. Cystine bridges form between cysteine 29-cysteine 58, cysteine 36-cysteine 51, and cysteine 41-cysteine 59.

The protein belongs to the beta-defensin family. Only expressed in epididymis (caput, corpus and cauda).

It localises to the secreted. In terms of biological role, synthetic Defb38 kills both Gram-negative (E.coli and P.aeruginosa) and Gram-positive (E.faecium) bacteria. In Mus musculus (Mouse), this protein is Beta-defensin 38 (Defb38).